We begin with the raw amino-acid sequence, 216 residues long: Endoplasmic reticulum vesicle protein 25 (216 aa).

A signal peptide spans 1-25 (MGSSRLAMRSALGLFFLLFVQISLA). The Lumenal segment spans residues 26 to 185 (LKFDIAAGKG…TNESTNERVK (160 aa)). The GOLD domain occupies 36-126 (ERCIRNFVLK…HRSIELDVDI (91 aa)). Residues 186–206 (WFAFGTMGMLVGLGVWQVIYL) form a helical membrane-spanning segment. The Cytoplasmic portion of the chain corresponds to 207–216 (RAYFRSKHLI).

This sequence belongs to the EMP24/GP25L family.

It localises to the endoplasmic reticulum membrane. Its subcellular location is the golgi apparatus membrane. Functionally, constituent of COPII-coated endoplasmic reticulum-derived transport vesicles. Required for efficient transport of a subset of secretory proteins to the Golgi. Facilitates retrograde transport from the Golgi to the endoplasmic reticulum. This Emericella nidulans (strain FGSC A4 / ATCC 38163 / CBS 112.46 / NRRL 194 / M139) (Aspergillus nidulans) protein is Endoplasmic reticulum vesicle protein 25 (erv25).